The chain runs to 91 residues: Small ribosomal subunit protein bS20 (91 aa).

Belongs to the bacterial ribosomal protein bS20 family.

Functionally, binds directly to 16S ribosomal RNA. The chain is Small ribosomal subunit protein bS20 from Acidithiobacillus ferrooxidans (strain ATCC 23270 / DSM 14882 / CIP 104768 / NCIMB 8455) (Ferrobacillus ferrooxidans (strain ATCC 23270)).